The sequence spans 455 residues: Carbamoyl phosphate synthase arginine-specific small chain (455 aa).

A mitochondrion-targeting transit peptide spans 1 to 28 (MFARFCKAIPAKGRAFPSVNASIQSRLM). The Glutamine amidotransferase type-1 domain maps to 219–406 (HVAVIDCGVK…IDSVRKYKAN (188 aa)). C295 serves as the catalytic Nucleophile. Catalysis depends on residues H379 and E381.

This sequence belongs to the CarA family. Heterodimer composed of 2 chains; the small (or glutamine) chain promotes the hydrolysis of glutamine to ammonia, which is used by the large (or ammonia) chain to synthesize carbamoyl phosphate.

It is found in the mitochondrion matrix. The enzyme catalyses hydrogencarbonate + L-glutamine + 2 ATP + H2O = carbamoyl phosphate + L-glutamate + 2 ADP + phosphate + 2 H(+). It catalyses the reaction L-glutamine + H2O = L-glutamate + NH4(+). Its pathway is amino-acid biosynthesis; L-arginine biosynthesis; carbamoyl phosphate from bicarbonate: step 1/1. Small subunit of the arginine-specific carbamoyl phosphate synthase (CPSase). CPSase catalyzes the formation of carbamoyl phosphate from the ammonia moiety of glutamine, carbonate, and phosphate donated by ATP, the first step of the arginine biosynthetic pathway. The small subunit (glutamine amidotransferase) binds and cleaves glutamine to supply the large subunit with the substrate ammonia. The polypeptide is Carbamoyl phosphate synthase arginine-specific small chain (cpa1) (Aspergillus clavatus (strain ATCC 1007 / CBS 513.65 / DSM 816 / NCTC 3887 / NRRL 1 / QM 1276 / 107)).